A 92-amino-acid chain; its full sequence is Small ribosomal subunit protein uS19 (92 aa).

This sequence belongs to the universal ribosomal protein uS19 family.

Its function is as follows. Protein S19 forms a complex with S13 that binds strongly to the 16S ribosomal RNA. This chain is Small ribosomal subunit protein uS19, found in Buchnera aphidicola subsp. Acyrthosiphon pisum (strain 5A).